The chain runs to 316 residues: Methionyl-tRNA formyltransferase (316 aa).

112–115 (GLLP) serves as a coordination point for (6S)-5,6,7,8-tetrahydrofolate.

Belongs to the Fmt family.

The catalysed reaction is L-methionyl-tRNA(fMet) + (6R)-10-formyltetrahydrofolate = N-formyl-L-methionyl-tRNA(fMet) + (6S)-5,6,7,8-tetrahydrofolate + H(+). Attaches a formyl group to the free amino group of methionyl-tRNA(fMet). The formyl group appears to play a dual role in the initiator identity of N-formylmethionyl-tRNA by promoting its recognition by IF2 and preventing the misappropriation of this tRNA by the elongation apparatus. The chain is Methionyl-tRNA formyltransferase from Chlamydia muridarum (strain MoPn / Nigg).